Consider the following 247-residue polypeptide: MAAAIASGLIRQKRQAREQHWDRPSASRRRSSPSKNRGLFNGNLVDIFSKVRIFGLKKRRLRRQDPQLKGIVTRLYCRQGYYLQMHPDGALDGTKDDSTNSTLFNLIPVGLRVVAIQGVKTGLYIAMNGEGYLYPSELFTPECKFKESVFENYYVIYSSMLYRQQESGRAWFLGLNKEGQVMKGNRVKKTKPAAHFLPKPLEVAMYREPSLHDVGETVPKAGVTPSKSTSASAIMNGGKPVNKCKTT.

2 disordered regions span residues 1 to 37 and 216 to 247; these read MAAA…SKNR and ETVP…CKTT. Residues 15–25 show a composition bias toward basic and acidic residues; that stretch reads QAREQHWDRPS.

This sequence belongs to the heparin-binding growth factors family. In terms of assembly, interacts with SCN8A. As to expression, brain and testis; widely distributed in the developing nervous system. In adult, high levels in the granular layer of the cerebellum, less in hippocampus and olfactory bulb.

The protein localises to the nucleus. Its function is as follows. Probably involved in nervous system development and function. This Mus musculus (Mouse) protein is Fibroblast growth factor 14 (Fgf14).